Reading from the N-terminus, the 280-residue chain is Phosphatidylserine decarboxylase proenzyme (280 aa).

Residues D88, H145, and S248 each act as charge relay system; for autoendoproteolytic cleavage activity in the active site. S248 (schiff-base intermediate with substrate; via pyruvic acid; for decarboxylase activity) is an active-site residue. S248 is subject to Pyruvic acid (Ser); by autocatalysis.

The protein belongs to the phosphatidylserine decarboxylase family. PSD-B subfamily. Prokaryotic type I sub-subfamily. Heterodimer of a large membrane-associated beta subunit and a small pyruvoyl-containing alpha subunit. Requires pyruvate as cofactor. Is synthesized initially as an inactive proenzyme. Formation of the active enzyme involves a self-maturation process in which the active site pyruvoyl group is generated from an internal serine residue via an autocatalytic post-translational modification. Two non-identical subunits are generated from the proenzyme in this reaction, and the pyruvate is formed at the N-terminus of the alpha chain, which is derived from the carboxyl end of the proenzyme. The autoendoproteolytic cleavage occurs by a canonical serine protease mechanism, in which the side chain hydroxyl group of the serine supplies its oxygen atom to form the C-terminus of the beta chain, while the remainder of the serine residue undergoes an oxidative deamination to produce ammonia and the pyruvoyl prosthetic group on the alpha chain. During this reaction, the Ser that is part of the protease active site of the proenzyme becomes the pyruvoyl prosthetic group, which constitutes an essential element of the active site of the mature decarboxylase.

Its subcellular location is the cell membrane. It catalyses the reaction a 1,2-diacyl-sn-glycero-3-phospho-L-serine + H(+) = a 1,2-diacyl-sn-glycero-3-phosphoethanolamine + CO2. It participates in phospholipid metabolism; phosphatidylethanolamine biosynthesis; phosphatidylethanolamine from CDP-diacylglycerol: step 2/2. Catalyzes the formation of phosphatidylethanolamine (PtdEtn) from phosphatidylserine (PtdSer). This is Phosphatidylserine decarboxylase proenzyme from Methylobacillus flagellatus (strain ATCC 51484 / DSM 6875 / VKM B-1610 / KT).